The following is a 738-amino-acid chain: DNA topoisomerase 4 subunit A (738 aa).

The Topo IIA-type catalytic domain occupies 32–496; that stretch reads LPDVRDGLKP…SFEEVDLTNQ (465 aa). Catalysis depends on tyrosine 120, which acts as the O-(5'-phospho-DNA)-tyrosine intermediate.

It belongs to the type II topoisomerase GyrA/ParC subunit family. ParC type 1 subfamily. Heterotetramer composed of ParC and ParE.

Its subcellular location is the cell membrane. It carries out the reaction ATP-dependent breakage, passage and rejoining of double-stranded DNA.. In terms of biological role, topoisomerase IV is essential for chromosome segregation. It relaxes supercoiled DNA. Performs the decatenation events required during the replication of a circular DNA molecule. This chain is DNA topoisomerase 4 subunit A, found in Rickettsia prowazekii (strain Madrid E).